The sequence spans 404 residues: Formate-dependent phosphoribosylglycinamide formyltransferase (404 aa).

N(1)-(5-phospho-beta-D-ribosyl)glycinamide contacts are provided by residues 27–28 and Glu87; that span reads EL. Residues Arg120, Lys162, 167-172, 202-205, and Glu210 contribute to the ATP site; these read SSGKGQ and EGFI. The 196-residue stretch at 125 to 320 folds into the ATP-grasp domain; the sequence is RLAAETLGLP…EFELHARALL (196 aa). Mg(2+)-binding residues include Glu279 and Glu291. Residues Asp298, Lys367, and 374-375 each bind N(1)-(5-phospho-beta-D-ribosyl)glycinamide; that span reads RR.

This sequence belongs to the PurK/PurT family. As to quaternary structure, homodimer.

It carries out the reaction N(1)-(5-phospho-beta-D-ribosyl)glycinamide + formate + ATP = N(2)-formyl-N(1)-(5-phospho-beta-D-ribosyl)glycinamide + ADP + phosphate + H(+). The protein operates within purine metabolism; IMP biosynthesis via de novo pathway; N(2)-formyl-N(1)-(5-phospho-D-ribosyl)glycinamide from N(1)-(5-phospho-D-ribosyl)glycinamide (formate route): step 1/1. Its function is as follows. Involved in the de novo purine biosynthesis. Catalyzes the transfer of formate to 5-phospho-ribosyl-glycinamide (GAR), producing 5-phospho-ribosyl-N-formylglycinamide (FGAR). Formate is provided by PurU via hydrolysis of 10-formyl-tetrahydrofolate. In Bordetella pertussis (strain Tohama I / ATCC BAA-589 / NCTC 13251), this protein is Formate-dependent phosphoribosylglycinamide formyltransferase.